Consider the following 611-residue polypeptide: RAC serine/threonine-protein kinase (611 aa).

The span at 14–25 (VVASAPAPGSAS) shows a compositional bias: low complexity. 2 disordered regions span residues 14–33 (VVAS…SPTT) and 45–88 (QSTH…NTTF). A Phosphoserine modification is found at S30. The region spanning 106 to 211 (QVVKEGWLMK…WTEAIRNVSS (106 aa)) is the PH domain. Residues 266-523 (FEFLKVLGKG…VKEIQAHPFF (258 aa)) enclose the Protein kinase domain. ATP contacts are provided by residues 272–280 (LGKGTFGKV) and K295. The Proton acceptor role is filled by D389. Residues 524 to 597 (ASINWTDLVL…QGDMASTLGT (74 aa)) enclose the AGC-kinase C-terminal domain. S586 is modified (phosphoserine).

This sequence belongs to the protein kinase superfamily. AGC Ser/Thr protein kinase family. RAC subfamily. Interacts with trbl. Phosphorylated and activated by Pk61C/PDK1. Phosphorylated on Ser-586 by the TORC2 complex. Ubiquitously expressed. Present in ovary, where it is concentrated at the basal side of follicle cells.

It is found in the cytoplasm. The protein localises to the cytosol. Its subcellular location is the cell membrane. The enzyme catalyses L-seryl-[protein] + ATP = O-phospho-L-seryl-[protein] + ADP + H(+). The catalysed reaction is L-threonyl-[protein] + ATP = O-phospho-L-threonyl-[protein] + ADP + H(+). Functionally, serine/threonine kinase involved in various developmental processes. During early embryogenesis, acts as a survival protein. During mid-embryogenesis, phosphorylates and activates trh, a transcription factor required for tracheal cell fate determination. Also regulates tracheal cell migration. Later in development, acts downstream of PI3K and Pk61C/PDK1 in the insulin receptor transduction pathway which regulates cell growth and organ size, by phosphorylating and antagonizing FOXO transcription factor. Controls follicle cell size during oogenesis. May also stimulate cell growth by phosphorylating Gig/Tsc2 and inactivating the Tsc complex. Dephosphorylation of 'Ser-586' by Phlpp triggers apoptosis and suppression of tumor growth. The sequence is that of RAC serine/threonine-protein kinase from Drosophila melanogaster (Fruit fly).